The following is a 326-amino-acid chain: Diphthine methyltransferase (326 aa).

WD repeat units follow at residues methionine 65–phenylalanine 105, aspartate 113–lysine 152, glutamate 155–tryptophan 195, and glutamate 293–isoleucine 326.

Belongs to the DPH7 family.

The protein resides in the cytoplasm. It localises to the nucleus. The catalysed reaction is diphthine methyl ester-[translation elongation factor 2] + H2O = diphthine-[translation elongation factor 2] + methanol + H(+). It participates in protein modification; peptidyl-diphthamide biosynthesis. Functionally, catalyzes the demethylation of diphthine methyl ester to form diphthine, an intermediate in diphthamide biosynthesis, a post-translational modification of histidine which occurs in translation elongation factor 2 (eft201 and eft202). The chain is Diphthine methyltransferase (rrt2) from Schizosaccharomyces pombe (strain 972 / ATCC 24843) (Fission yeast).